The following is a 178-amino-acid chain: MEIRDNNKVNLCFAFDNLRKELSRPYGILFTNNKLFLDFVSKSIQQGFKVITVGDYVSRVLEENGIIPFLEVIDGKTKRSIPQRTIVKNKEYRVTNEAGKIRFEIFEIMENILKDRDGGVVFVNGEEDLLVIPVTLSADNGDIVIYGQPNAGAVVIIVNEMIRWRVRDILEKAVVKEC.

The GTP site is built by D55, V57, D74, K76, and E127.

Belongs to the GTP-dependent DPCK family.

It catalyses the reaction 3'-dephospho-CoA + GTP = GDP + CoA + H(+). The protein operates within cofactor biosynthesis; coenzyme A biosynthesis. Its function is as follows. Catalyzes the GTP-dependent phosphorylation of the 3'-hydroxyl group of dephosphocoenzyme A to form coenzyme A (CoA). In Saccharolobus islandicus (strain Y.N.15.51 / Yellowstone #2) (Sulfolobus islandicus), this protein is GTP-dependent dephospho-CoA kinase.